A 69-amino-acid polypeptide reads, in one-letter code: Bowman-Birk type proteinase inhibitor A2 (69 aa).

4 cysteine pairs are disulfide-bonded: Cys-12/Cys-31, Cys-18/Cys-29, Cys-38/Cys-45, and Cys-42/Cys-59.

It belongs to the Bowman-Birk serine protease inhibitor family. In terms of tissue distribution, expressed in bulb (at protein level).

Its function is as follows. Serine protease inhibitor. This chain is Bowman-Birk type proteinase inhibitor A2, found in Hyacinthus orientalis (Common hyacinth).